The primary structure comprises 248 residues: 2,3-bisphosphoglycerate-dependent phosphoglycerate mutase (248 aa).

Residues 8–15 (RHGESTWN), 21–22 (TG), Arg-60, 87–90 (ERHY), Lys-98, 114–115 (RR), and 183–184 (GN) contribute to the substrate site. The active-site Tele-phosphohistidine intermediate is the His-9. The Proton donor/acceptor role is filled by Glu-87.

The protein belongs to the phosphoglycerate mutase family. BPG-dependent PGAM subfamily. In terms of assembly, homodimer.

The enzyme catalyses (2R)-2-phosphoglycerate = (2R)-3-phosphoglycerate. The protein operates within carbohydrate degradation; glycolysis; pyruvate from D-glyceraldehyde 3-phosphate: step 3/5. Functionally, catalyzes the interconversion of 2-phosphoglycerate and 3-phosphoglycerate. The polypeptide is 2,3-bisphosphoglycerate-dependent phosphoglycerate mutase (Ralstonia nicotianae (strain ATCC BAA-1114 / GMI1000) (Ralstonia solanacearum)).